A 320-amino-acid polypeptide reads, in one-letter code: MQTRNTLSWIREEITRSISVSLMIYIITWASISSAYPIFAQQNYENPREATGRIVCANCHLANKPVDIEVPQTVLPDTVFEAVVKIPYDMQLKQVLANGKKGALNVGAVLILPEGFELAPPDRISPEIKEKIGTLSFQNYRPNKKNILVIGPVPGQKYSEITFPILAPDPATNKDVHFLKYPIYVGGNRGRGQIYPDGSKSNNTVYNATTGGIISKILRKEKGGYEITIVDASNGREVIDIIPRGLELLVSEGESIKLDQPLTSNPNVGGFGQGDAEIVLQDPLRVQGLLFFLGSVVLAQIFLVLKKKQFEKVQLSEMNF.

An N-terminal signal peptide occupies residues 1–35; the sequence is MQTRNTLSWIREEITRSISVSLMIYIITWASISSA. Positions 36, 56, 59, and 60 each coordinate heme. A helical membrane pass occupies residues 286–306; the sequence is VQGLLFFLGSVVLAQIFLVLK.

It belongs to the cytochrome f family. In terms of assembly, the 4 large subunits of the cytochrome b6-f complex are cytochrome b6, subunit IV (17 kDa polypeptide, petD), cytochrome f and the Rieske protein, while the 4 small subunits are PetG, PetL, PetM and PetN. The complex functions as a dimer. It depends on heme as a cofactor.

It localises to the plastid. Its subcellular location is the chloroplast thylakoid membrane. Component of the cytochrome b6-f complex, which mediates electron transfer between photosystem II (PSII) and photosystem I (PSI), cyclic electron flow around PSI, and state transitions. This chain is Cytochrome f, found in Olimarabidopsis pumila (Dwarf rocket).